A 355-amino-acid chain; its full sequence is Arginine kinase (355 aa).

In terms of domain architecture, Phosphagen kinase N-terminal spans 8-90; it reads KLQAGFKKLE…FDPIIEDYHV (83 aa). L-arginine is bound at residue 63 to 67; it reads GVGIY. Residues 118–355 form the Phosphagen kinase C-terminal domain; that stretch reads YVISTRVRCG…LQLIKMEKEM (238 aa). Residues 121 to 125 and His-184 contribute to the ATP site; that span reads STRVR. Position 224 (Glu-224) interacts with L-arginine. Residue Arg-228 coordinates ATP. Position 270 (Cys-270) interacts with L-arginine. ATP is bound by residues 279 to 283 and 308 to 313; these read RASVH and RGTRGE. Glu-313 is a binding site for L-arginine.

This sequence belongs to the ATP:guanido phosphotransferase family. Monomer.

It catalyses the reaction L-arginine + ATP = N(omega)-phospho-L-arginine + ADP + H(+). The chain is Arginine kinase from Penaeus japonicus (Kuruma prawn).